The following is a 437-amino-acid chain: tRNA(Ile)-lysidine synthase (437 aa).

22 to 27 (SGGLDS) provides a ligand contact to ATP.

Belongs to the tRNA(Ile)-lysidine synthase family.

It localises to the cytoplasm. The catalysed reaction is cytidine(34) in tRNA(Ile2) + L-lysine + ATP = lysidine(34) in tRNA(Ile2) + AMP + diphosphate + H(+). Its function is as follows. Ligates lysine onto the cytidine present at position 34 of the AUA codon-specific tRNA(Ile) that contains the anticodon CAU, in an ATP-dependent manner. Cytidine is converted to lysidine, thus changing the amino acid specificity of the tRNA from methionine to isoleucine. The polypeptide is tRNA(Ile)-lysidine synthase (Xylella fastidiosa (strain 9a5c)).